The following is a 313-amino-acid chain: Dimethyladenosine transferase (313 aa).

Residues 1 to 21 (MPKVKSGAIGRRRGRQEQRRE) form a disordered region. The S-adenosyl-L-methionine site is built by His-37, Leu-39, Gly-64, Glu-85, Asp-113, and Asn-128.

It belongs to the class I-like SAM-binding methyltransferase superfamily. rRNA adenine N(6)-methyltransferase family. As to quaternary structure, part of the small subunit (SSU) processome, composed of more than 70 proteins and the RNA chaperone small nucleolar RNA (snoRNA) U3.

The protein resides in the nucleus. Its subcellular location is the nucleoplasm. The protein localises to the nucleolus. It carries out the reaction adenosine(1779)/adenosine(1780) in 18S rRNA + 4 S-adenosyl-L-methionine = N(6)-dimethyladenosine(1779)/N(6)-dimethyladenosine(1780) in 18S rRNA + 4 S-adenosyl-L-homocysteine + 4 H(+). Functionally, specifically dimethylates two adjacent adenosines in the loop of a conserved hairpin near the 3'-end of 18S rRNA in the 40S particle. Involved in the pre-rRNA processing steps leading to small-subunit rRNA production independently of its RNA-modifying catalytic activity. Part of the small subunit (SSU) processome, first precursor of the small eukaryotic ribosomal subunit. During the assembly of the SSU processome in the nucleolus, many ribosome biogenesis factors, an RNA chaperone and ribosomal proteins associate with the nascent pre-rRNA and work in concert to generate RNA folding, modifications, rearrangements and cleavage as well as targeted degradation of pre-ribosomal RNA by the RNA exosome. The polypeptide is Dimethyladenosine transferase (Homo sapiens (Human)).